The chain runs to 760 residues: DNA-directed RNA polymerase subunit beta' (760 aa).

Zn(2+) is bound by residues C76, C78, C90, and C93. 3 residues coordinate Mg(2+): D594, D596, and D598.

The protein belongs to the RNA polymerase beta' chain family. RpoC1 subfamily. In terms of assembly, in plastids the minimal PEP RNA polymerase catalytic core is composed of four subunits: alpha, beta, beta', and beta''. When a (nuclear-encoded) sigma factor is associated with the core the holoenzyme is formed, which can initiate transcription. The cofactor is Mg(2+). It depends on Zn(2+) as a cofactor.

The protein resides in the plastid. It is found in the chloroplast. It catalyses the reaction RNA(n) + a ribonucleoside 5'-triphosphate = RNA(n+1) + diphosphate. DNA-dependent RNA polymerase catalyzes the transcription of DNA into RNA using the four ribonucleoside triphosphates as substrates. This Bigelowiella natans (Pedinomonas minutissima) protein is DNA-directed RNA polymerase subunit beta'.